Here is a 257-residue protein sequence, read N- to C-terminus: uncharacterized protein (257 aa).

Residues isoleucine 6–phenylalanine 26 form a helical membrane-spanning segment.

This sequence belongs to the staphylococcal tandem lipoprotein family.

The protein localises to the cell membrane. This is an uncharacterized protein from Staphylococcus aureus (strain N315).